The primary structure comprises 304 residues: Coenzyme PQQ synthesis protein B (304 aa).

Belongs to the PqqB family.

Its pathway is cofactor biosynthesis; pyrroloquinoline quinone biosynthesis. May be involved in the transport of PQQ or its precursor to the periplasm. The protein is Coenzyme PQQ synthesis protein B of Stutzerimonas stutzeri (Pseudomonas stutzeri).